The sequence spans 294 residues: Beta-lactamase SME-1 (294 aa).

The first 27 residues, 1-27, serve as a signal peptide directing secretion; sequence MSNKVNFKTASFLFSVCLALSAFNAHA. A disulfide bond links Cys-72 and Cys-242. The active-site Nucleophile; acyl-ester intermediate is the Ser-73. Positions 73, 76, 133, and 135 each coordinate a beta-lactam. Glu-172 acts as the Proton acceptor in catalysis. Thr-239 lines the a beta-lactam pocket.

The protein belongs to the class-A beta-lactamase family.

The enzyme catalyses a beta-lactam + H2O = a substituted beta-amino acid. With respect to regulation, partially inhibited by the beta-lactamase-blocking agents, clavulanic acid and tazobactam. Not inhibited by EDTA. In terms of biological role, class A beta-lactamase which confers resistance to the beta-lactam antibiotics, including penicillins, some cephalosporins and carbapenems, to JM109 strain E.coli. Acts via hydrolysis of the beta-lactam ring. Has penicillin-, cephalosporin- and carbapenem-hydrolyzing activities. This Serratia marcescens protein is Beta-lactamase SME-1.